Reading from the N-terminus, the 93-residue chain is UPF0147 protein MJ1419 (93 aa).

This sequence belongs to the UPF0147 family.

The sequence is that of UPF0147 protein MJ1419 from Methanocaldococcus jannaschii (strain ATCC 43067 / DSM 2661 / JAL-1 / JCM 10045 / NBRC 100440) (Methanococcus jannaschii).